A 340-amino-acid polypeptide reads, in one-letter code: 4-hydroxy-2-oxovalerate aldolase (340 aa).

In terms of domain architecture, Pyruvate carboxyltransferase spans 8–260 (VILHDMSLRD…HHGVNLYDIM (253 aa)). 16–17 (RD) is a substrate binding site. Aspartate 17 lines the Mn(2+) pocket. Histidine 20 acts as the Proton acceptor in catalysis. Positions 170 and 199 each coordinate substrate. Mn(2+)-binding residues include histidine 199 and histidine 201. A substrate-binding site is contributed by tyrosine 290.

Belongs to the 4-hydroxy-2-oxovalerate aldolase family.

It carries out the reaction (S)-4-hydroxy-2-oxopentanoate = acetaldehyde + pyruvate. The chain is 4-hydroxy-2-oxovalerate aldolase from Shewanella halifaxensis (strain HAW-EB4).